The primary structure comprises 1589 residues: Polyhomeotic-proximal chromatin protein (1589 aa).

Residues 1-15 (MDRRALKFMQKRADT) are compositionally biased toward basic and acidic residues. Disordered regions lie at residues 1–85 (MDRR…GGKQ), 107–174 (KYDV…NCNS), 252–290 (LQQQ…STAI), 1112–1244 (LSTA…STTT), and 1260–1294 (AVST…NGSK). Low complexity-rich tracts occupy residues 18 to 28 (DTTTPVSTTAS), 60 to 80 (NHNN…QQQQ), and 119 to 139 (AQQQ…VTPT). Polar residues predominate over residues 154-174 (HTPSTPNRPSAPSTPNTNCNS). Residues 260 to 271 (NGGGAASAGAGG) are compositionally biased toward gly residues. Residues 272-285 (AASPANSQQSQQQQ) are compositionally biased toward low complexity. The residue at position 1145 (serine 1145) is a Phosphoserine. At threonine 1148 the chain carries Phosphothreonine. Over residues 1157-1180 (TTPKSSTPATVSASVEASSSTGEA) the composition is skewed to low complexity. Residues 1189–1221 (RSSTPSKGATTPTSKQSNAAVQPPSSTTPNSVS) are compositionally biased toward polar residues. 2 stretches are compositionally biased toward low complexity: residues 1230–1244 (TCGS…STTT) and 1260–1290 (AVST…SSIS). Residues 1356-1389 (SAPGSDMVACEQCGKMEHKAKLKRKRYCSPGCSR) form an FCS-type zinc finger. Residues cysteine 1365, cysteine 1368, cysteine 1383, and cysteine 1387 each coordinate Zn(2+). An SAM domain is found at 1513 to 1577 (WSVDDVSNFI…VAKVESIKEV (65 aa)).

In terms of assembly, component of PRC1 complex, which contains many PcG proteins like Pc, ph, Scm, Psc, Sce and also chromatin-remodeling proteins such as histone deacetylases. This complex is distinct from the Esc/E(z) complex, at least composed of esc, E(z), Su(z)12, HDAC1/Rpd3 and Caf1-55. The 2 complexes however cooperate and interact together during the first 3 hours of development to establish PcG silencing. Interacts with the SAM domain of Scm via its SAM domain in vitro. Interacts with Trl in vivo and with corto in vitro. In terms of tissue distribution, salivary glands.

It is found in the nucleus. Polycomb group (PcG) protein. PcG proteins act by forming multiprotein complexes, which are required to maintain the transcriptionally repressive state of homeotic genes throughout development. PcG proteins are not required to initiate repression, but to maintain it during later stages of development. Component of the PcG multiprotein PRC1 complex, a complex that acts via chromatin remodeling and modification of histones; it mediates monoubiquitination of histone H2A 'Lys-118', rendering chromatin heritably changed in its expressibility. Plays a role in regulating the expression of other pair-rule genes such as eve, ftz, and H. This Drosophila melanogaster (Fruit fly) protein is Polyhomeotic-proximal chromatin protein (ph-p).